Reading from the N-terminus, the 557-residue chain is Enhancer of polycomb-like protein 1 (557 aa).

Disordered regions lie at residues 323 to 349 (VKPA…RPQP) and 424 to 449 (QSHN…TYST). Pro residues predominate over residues 327 to 337 (APVPTPAPPVK). Residues 429–441 (LSIPSSTPSTPLS) show a composition bias toward low complexity.

It belongs to the enhancer of polycomb family. Component of the NuA4 histone acetyltransferase complex.

The protein localises to the nucleus. Functionally, component of the NuA4 histone acetyltransferase complex which is involved in transcriptional activation of selected genes principally by acetylation of nucleosomal histone H4 and H2A. The NuA4 complex is also involved in DNA repair. Involved in gene silencing by neighboring heterochromatin, blockage of the silencing spreading along the chromosome, and required for cell cycle progression through G2/M. The sequence is that of Enhancer of polycomb-like protein 1 (epl1) from Schizosaccharomyces pombe (strain 972 / ATCC 24843) (Fission yeast).